The sequence spans 237 residues: HTH-type transcriptional regulator GmuR (237 aa).

The region spanning 1–69 is the HTH gntR-type domain; it reads MNKYEIIANE…RGHGTFIIQS (69 aa). The H-T-H motif DNA-binding region spans 29–48; the sequence is EVSLAKEFNSSRMTMKRALD.

It localises to the cytoplasm. In terms of biological role, transcriptional repressor of the gmuBACDREFG operon which is involved in the uptake and degradation of glucomannan. The protein is HTH-type transcriptional regulator GmuR (gmuR) of Bacillus subtilis (strain 168).